Reading from the N-terminus, the 231-residue chain is 6-phosphogluconolactonase (231 aa).

It belongs to the glucosamine/galactosamine-6-phosphate isomerase family. 6-phosphogluconolactonase subfamily.

The catalysed reaction is 6-phospho-D-glucono-1,5-lactone + H2O = 6-phospho-D-gluconate + H(+). Its pathway is carbohydrate degradation; pentose phosphate pathway; D-ribulose 5-phosphate from D-glucose 6-phosphate (oxidative stage): step 2/3. In terms of biological role, hydrolysis of 6-phosphogluconolactone to 6-phosphogluconate. The sequence is that of 6-phosphogluconolactonase (pgl) from Neisseria meningitidis serogroup A / serotype 4A (strain DSM 15465 / Z2491).